We begin with the raw amino-acid sequence, 913 residues long: Calcium-activated chloride channel regulator 1 (913 aa).

The N-terminal stretch at 1–21 (MGPFKSSVFILILHLLEGALS) is a signal peptide. The metalloprotease domain stretch occupies residues 46–199 (DETLIQQIKD…GITGKIEVNK (154 aa)). Position 156 (histidine 156) interacts with Zn(2+). Glutamate 157 is an active-site residue. Histidine 160 and aspartate 167 together coordinate Zn(2+). Residues 306-475 (IVCLVLDKSG…NGLIDAFGAL (170 aa)) form the VWFA domain. N-linked (GlcNAc...) asparagine glycosylation is found at asparagine 503, asparagine 769, asparagine 803, asparagine 809, asparagine 830, asparagine 835, asparagine 885, and asparagine 889. Residues 866–885 (PPQTPPETPSPDETSAPCPN) form a disordered region.

This sequence belongs to the CLCR family. Glycosylated. In terms of processing, the translation product is autoproteolytically cleaved by the metalloprotease domain in the endoplasmic reticulum into a N-terminal and a C-terminal products that remain physically associated with each other. The cleavage is necessary for calcium-activated chloride channel (CaCC) activation activity.

It localises to the secreted. It is found in the extracellular space. May be involved in mediating calcium-activated chloride conductance. May play critical roles in goblet cell metaplasia, mucus hypersecretion, cystic fibrosis and AHR. May be involved in the regulation of mucus production and/or secretion by goblet cells. Involved in the regulation of tissue inflammation in the innate immune response. May play a role as a tumor suppressor. Induces MUC5AC. This Macaca mulatta (Rhesus macaque) protein is Calcium-activated chloride channel regulator 1 (CLCA1).